We begin with the raw amino-acid sequence, 90 residues long: Large ribosomal subunit protein eL34 (90 aa).

Residues 38–65 form a disordered region; the sequence is ARCGRPLGGVPRGRPPRVRRLSKTAKRP. The segment covering 51–62 has biased composition (basic residues); the sequence is RPPRVRRLSKTA.

Belongs to the eukaryotic ribosomal protein eL34 family.

The sequence is that of Large ribosomal subunit protein eL34 (rpl34e) from Aeropyrum pernix (strain ATCC 700893 / DSM 11879 / JCM 9820 / NBRC 100138 / K1).